The following is a 376-amino-acid chain: Transforming growth factor beta-1 proprotein (376 aa).

The N-terminal stretch at 1–22 (MRVESLLLALQCLLGFVHYSGA) is a signal peptide. The straightjacket domain stretch occupies residues 23-68 (LSTCSPLDLELIKRKRIEAIRGQILSKLRLSKEPEVDEEKESQNIP). The segment at 69-258 (AELISVYNST…SLPLDGNNSS (190 aa)) is arm domain. N-linked (GlcNAc...) asparagine glycosylation is found at N76, N125, and N167. The segment at 214–238 (DPQKTFQLKIPGLVLVRGDTETLAV) is bowtie tail. The Cell attachment site signature appears at 230–232 (RGD). Cystine bridges form between C272–C280, C308–C373, and C312–C375.

This sequence belongs to the TGF-beta family. In terms of assembly, latency-associated peptide: Homodimer; disulfide-linked. Latency-associated peptide: Interacts with Transforming growth factor beta-1 (TGF-beta-1) chain; interaction is non-covalent and maintains (TGF-beta-1) in a latent state; each Latency-associated peptide (LAP) monomer interacts with TGF-beta-1 in the other monomer. Transforming growth factor beta-1: Homodimer; disulfide-linked. Transforming growth factor beta-1: Interacts with TGF-beta receptors (tgfbr1 and tgfbr2), leading to signal transduction. Interacts with EFEMP2. In terms of processing, transforming growth factor beta-1 proprotein: The precursor proprotein is cleaved in the Golgi apparatus to form Transforming growth factor beta-1 (TGF-beta-1) and Latency-associated peptide (LAP) chains, which remain non-covalently linked, rendering TGF-beta-1 inactive.

Its subcellular location is the secreted. It localises to the extracellular space. It is found in the extracellular matrix. Functionally, transforming growth factor beta-1 proprotein: Precursor of the Latency-associated peptide (LAP) and Transforming growth factor beta-1 (TGF-beta-1) chains, which constitute the regulatory and active subunit of TGF-beta-1, respectively. Required to maintain the Transforming growth factor beta-1 (TGF-beta-1) chain in a latent state during storage in extracellular matrix. Associates non-covalently with TGF-beta-1 and regulates its activation via interaction with 'milieu molecules', such as LTBP1, LRRC32/GARP and LRRC33/NRROS, that control activation of TGF-beta-1. Interaction with integrins (ITGAV:ITGB6 or ITGAV:ITGB8) results in distortion of the Latency-associated peptide chain and subsequent release of the active TGF-beta-1. In terms of biological role, transforming growth factor beta-1: Multifunctional protein that regulates the growth and differentiation of various cell types and is involved in various processes, such as normal development, immune function, microglia function and responses to neurodegeneration. Activation into mature form follows different steps: following cleavage of the proprotein in the Golgi apparatus, Latency-associated peptide (LAP) and Transforming growth factor beta-1 (TGF-beta-1) chains remain non-covalently linked rendering TGF-beta-1 inactive during storage in extracellular matrix. At the same time, LAP chain interacts with 'milieu molecules', such as ltbp1, lrrc32/garp and lrrc33/nrros that control activation of TGF-beta-1 and maintain it in a latent state during storage in extracellular milieus. TGF-beta-1 is released from LAP by integrins (ITGAV:ITGB6 or ITGAV:ITGB8): integrin-binding to LAP stabilizes an alternative conformation of the LAP bowtie tail and results in distortion of the LAP chain and subsequent release of the active TGF-beta-1. Once activated following release of LAP, TGF-beta-1 acts by binding to TGF-beta receptors (tgfbr1 and tgfbr2), which transduce signal. While expressed by many cells types, TGF-beta-1 only has a very localized range of action within cell environment thanks to fine regulation of its activation by Latency-associated peptide chain (LAP) and 'milieu molecules'. Plays an important role in bone remodeling: acts as a potent stimulator of osteoblastic bone formation. Can promote either T-helper 17 cells (Th17) or regulatory T-cells (Treg) lineage differentiation in a concentration-dependent manner. Can induce epithelial-to-mesenchymal transition (EMT) and cell migration in various cell types. The chain is Transforming growth factor beta-1 proprotein (tgfb1) from Cyprinus carpio (Common carp).